Reading from the N-terminus, the 147-residue chain is Transcriptional regulator MraZ (147 aa).

SpoVT-AbrB domains lie at Gly5 to Val51 and Ala80 to Lys123.

It belongs to the MraZ family. As to quaternary structure, forms oligomers.

It localises to the cytoplasm. The protein resides in the nucleoid. The chain is Transcriptional regulator MraZ from Nitrosospira multiformis (strain ATCC 25196 / NCIMB 11849 / C 71).